The chain runs to 262 residues: tRNA pseudouridine synthase A (262 aa).

Aspartate 51 (nucleophile) is an active-site residue. Residue tyrosine 109 coordinates substrate.

Belongs to the tRNA pseudouridine synthase TruA family. As to quaternary structure, homodimer.

It carries out the reaction uridine(38/39/40) in tRNA = pseudouridine(38/39/40) in tRNA. Formation of pseudouridine at positions 38, 39 and 40 in the anticodon stem and loop of transfer RNAs. The chain is tRNA pseudouridine synthase A from Aliivibrio salmonicida (strain LFI1238) (Vibrio salmonicida (strain LFI1238)).